A 765-amino-acid polypeptide reads, in one-letter code: Endosialin (765 aa).

An N-terminal signal peptide occupies residues 1–17 (MLLRLLLAWVAAVPALG). Topologically, residues 18 to 695 (QVPWTPEPRA…GQSQRDDRWL (678 aa)) are extracellular. The C-type lectin domain occupies 30–156 (GPSSCYALFP…CTLAVDGYLC (127 aa)). 6 disulfides stabilise this stretch: cysteine 131-cysteine 147, cysteine 164-cysteine 213, cysteine 203-cysteine 230, cysteine 316-cysteine 326, cysteine 322-cysteine 335, and cysteine 337-cysteine 350. The 71-residue stretch at 162–232 (GACPALPLEV…WSQTGPLCPG (71 aa)) folds into the Sushi domain. Residues 312 to 351 (DTDECQIAGVCQQMCVNYVGGFECYCSEGHELEADGISCS) form the EGF-like; calcium-binding domain. 6 O-linked (GalNAc...) threonine glycosylation sites follow: threonine 401, threonine 428, threonine 448, threonine 456, threonine 459, and threonine 466. Serine 467 and serine 470 each carry an O-linked (GalNAc...) serine glycan. O-linked (GalNAc...) threonine glycosylation occurs at threonine 472. O-linked (GalNAc...) serine glycosylation is present at serine 477. 11 O-linked (GalNAc...) threonine glycosylation sites follow: threonine 488, threonine 517, threonine 520, threonine 535, threonine 552, threonine 554, threonine 556, threonine 570, threonine 571, threonine 604, and threonine 613. Residues 548–675 (MSPDTHTITY…QLPSVPSTAA (128 aa)) form a disordered region. The segment covering 622–633 (PAFPSSPLPPQR) has biased composition (pro residues). 2 O-linked (GalNAc...) serine glycosylation sites follow: serine 626 and serine 627. O-linked (GalNAc...) threonine glycans are attached at residues threonine 635 and threonine 638. The segment covering 635–647 (TNQTSSISPTHSY) has biased composition (polar residues). O-linked (GalNAc...) serine glycosylation is found at serine 639 and serine 640. O-linked (GalNAc...) threonine glycosylation occurs at threonine 644. The O-linked (GalNAc...) serine glycan is linked to serine 663. A glycan (O-linked (GalNAc...) threonine) is linked at threonine 673. The chain crosses the membrane as a helical span at residues 696 to 716 (LVALLVPTCVFLVVLLALGIV). The Cytoplasmic segment spans residues 717-765 (YCTRCGSHAPNKRITDCYRWVTHAGNKSSTEPMPPRGSLTGVQTCRTSV). Serine 754 carries the phosphoserine modification.

Interacts with PDGFRA; this interaction promotes PDGF receptor signaling pathway. Interacts with integrin beta-1/ITGB1. Interacts with insulin receptor/INSR; this interaction diminishes INSR autophosphorylation. Post-translationally, O-glycosylated by sialylated oligosaccharides. In terms of processing, may be N-glycosylated. Expressed in cell lines derived from endothelial cells, embryonic fibroblasts and preadipocytes. Expressed in skeletal muscle by a subset of pericytes.

Its subcellular location is the membrane. Its function is as follows. Cell surface glycoprotein involved in various biological processes including angiogenesis, immune response modulation, and tissue remodeling and repair. Participates in pericyte proliferation through positive modulation of the PDGF receptor signaling pathway. Acts as a scaffold for factor X, triggering allosteric changes and the spatial re-alignment of factor X with the TF-factor VIIa complex, thereby enhancing coagulation activation. Modulates the insulin signaling pathway by interacting with insulin receptor/INSR and by diminishing its capacity to be autophosphorylated in response to insulin. Also regulates LPS-induced inflammatory responses in macrophages by favoring production of proinflammatory cytokines. The polypeptide is Endosialin (Cd248) (Mus musculus (Mouse)).